Consider the following 487-residue polypeptide: Phosphoglucosamine mutase (487 aa).

Ser134 (phosphoserine intermediate) is an active-site residue. Residues Ser134, Asp277, Asp279, and Asp281 each contribute to the Mg(2+) site. A Phosphoserine modification is found at Ser134.

The protein belongs to the phosphohexose mutase family. It depends on Mg(2+) as a cofactor. Post-translationally, activated by phosphorylation.

The catalysed reaction is alpha-D-glucosamine 1-phosphate = D-glucosamine 6-phosphate. Functionally, catalyzes the conversion of glucosamine-6-phosphate to glucosamine-1-phosphate. The protein is Phosphoglucosamine mutase of Gloeothece citriformis (strain PCC 7424) (Cyanothece sp. (strain PCC 7424)).